Consider the following 150-residue polypeptide: Arginine repressor (150 aa).

It belongs to the ArgR family.

The protein resides in the cytoplasm. It participates in amino-acid biosynthesis; L-arginine biosynthesis [regulation]. Regulates arginine biosynthesis genes. The polypeptide is Arginine repressor (Clostridium kluyveri (strain NBRC 12016)).